We begin with the raw amino-acid sequence, 487 residues long: ATP synthase subunit beta 1 (487 aa).

G162 to T169 serves as a coordination point for ATP.

Belongs to the ATPase alpha/beta chains family. In terms of assembly, F-type ATPases have 2 components, CF(1) - the catalytic core - and CF(0) - the membrane proton channel. CF(1) has five subunits: alpha(3), beta(3), gamma(1), delta(1), epsilon(1). CF(0) has three main subunits: a(1), b(2) and c(9-12). The alpha and beta chains form an alternating ring which encloses part of the gamma chain. CF(1) is attached to CF(0) by a central stalk formed by the gamma and epsilon chains, while a peripheral stalk is formed by the delta and b chains.

The protein localises to the cell inner membrane. The catalysed reaction is ATP + H2O + 4 H(+)(in) = ADP + phosphate + 5 H(+)(out). In terms of biological role, produces ATP from ADP in the presence of a proton gradient across the membrane. The catalytic sites are hosted primarily by the beta subunits. The protein is ATP synthase subunit beta 1 of Gluconobacter oxydans (strain 621H) (Gluconobacter suboxydans).